A 396-amino-acid chain; its full sequence is Ornithine aminotransferase (396 aa).

Position 255 is an N6-(pyridoxal phosphate)lysine (Lys-255).

It belongs to the class-III pyridoxal-phosphate-dependent aminotransferase family. OAT subfamily. Requires pyridoxal 5'-phosphate as cofactor.

The protein localises to the cytoplasm. It catalyses the reaction a 2-oxocarboxylate + L-ornithine = L-glutamate 5-semialdehyde + an L-alpha-amino acid. The protein operates within amino-acid biosynthesis; L-proline biosynthesis; L-glutamate 5-semialdehyde from L-ornithine: step 1/1. Catalyzes the interconversion of ornithine to glutamate semialdehyde. The chain is Ornithine aminotransferase from Bacillus cereus (strain 03BB102).